Consider the following 180-residue polypeptide: MLKASVSNKARCYFWWHLLLKSGLLLFICMVLGIVFLASPKCFAVDNGSLQLNPNVITNSDGGVGTTSDFSIRSQLFTPTIDKLAKEQAHDNVPKQRETLDFSKQAINTLYNANTKKVVEQLFVNYKPQVIASSTSTSDSKTMIWYWVILLAAVPLIVLAIFLGQKNAQRRLRKKNERTH.

This is an uncharacterized protein from Clostridium acetobutylicum (strain ATCC 824 / DSM 792 / JCM 1419 / IAM 19013 / LMG 5710 / NBRC 13948 / NRRL B-527 / VKM B-1787 / 2291 / W).